The following is a 334-amino-acid chain: Mucin-15 (334 aa).

A signal peptide spans Met-1–Gly-23. The Extracellular segment spans residues Lys-24–Thr-236. N-linked (GlcNAc...) asparagine glycans are attached at residues Asn-30, Asn-61, Asn-79, Asn-90, Asn-148, Asn-155, Asn-163, Asn-218, and Asn-225. A disordered region spans residues Thr-64–Ser-104. Polar residues predominate over residues Leu-77–Glu-94. The helical transmembrane segment at Gly-237–Gly-257 threads the bilayer. Topologically, residues Tyr-258–Val-334 are cytoplasmic. The tract at residues Pro-304–Val-334 is disordered.

In terms of processing, highly glycosylated (N- and O-linked carbohydrates). In terms of tissue distribution, expressed in spleen, thymus, prostate, testis, ovary, small intestine, colon, peripheral blood leukocyte, bone marrow, lymph node and lung.

Its subcellular location is the cell membrane. The protein localises to the secreted. May play a role in the cell adhesion to the extracellular matrix. This is Mucin-15 (MUC15) from Homo sapiens (Human).